The following is an 885-amino-acid chain: MSSARSHVSMQNKYDRVVLLVDMDCFFCQVEEKQHPEYRNRPLAVVQYNPWRGGGIIAVNYAARAKGVTRHMRGDEAKDLCPEIVLCQVPNIREKADTSKYRDAGKEVANVLQRFTQLLERASVDEAYLDITETVNHRMQQMQSGAFALQPQELVNTFAVGYPSIGDYVNKITNRFANPYMDDERYQMSYDQNDLPAVRQSDIRLLIGASVAGEVRAAVKKETGYECSAGIAHNKILAKLAAGMNKPNKQTILPLTETASLFDSLPVGKIKGLGGKFGEVVCETLGIKFMGQVVKFSEVDLQRKFDEKNGTWLFNISRGIDLEAVTPRFYSKSIGCCKKFPGRNNITGLKTLQHWLGELSSEINDRLEKDFIENNRRAKHMVVQYVQDIDGEEVASSRSTALRDYDQESIVRLSLDLIKANTKTFLRPGSESALNNAIKFLGISVGKFETVSSGQNKLQEMFANQAAKKRRVSGDEPGQLPKVEMEKKQKQTDEFKMKSFFANYLQGAKKEDAKADGISANPLAAAAGAPNKNFVEEYKHKLHAAVRTEGTVLTSTPAEFKESFFSQYLKQQKKTGQQGSVTSREDSLDVQELAEELDAIEADNSKDFEEDTEEETELTSDTHMSKPEGQSSDAGQEQDPNTLNDSTGNDLYVETGIVPPTLTEDELKPSTSKRKFDEIESSVSNYKECYVEFAVPNLRTDILPTIKCDQCGANIPDEVKSLQTHRDHHFAQELSRTLRSTEREERTQSRQKISLKPTPPKKSKKTAGSGSSSYSTAPPSNSITKFFRAKPTQEQAPSDPQMNQCPECKAFIKCVDMPEHLDYHVARNLQRELNQQDLRTRTAALNKEKISPVQPKKQSQKKLNSTISASSSGTKTIAQFFSQSN.

Residues 18–274 (VLLVDMDCFF…LPVGKIKGLG (257 aa)) form the UmuC domain. Residues Asp22 and Met23 each contribute to the Mg(2+) site. Residues Asp22 and Met23 each contribute to the Mn(2+) site. Residue Arg70 participates in a 2'-deoxyribonucleoside 5'-triphosphate binding. Asp125 and Glu126 together coordinate Mg(2+). Positions 125 and 126 each coordinate Mn(2+). Glu126 is an active-site residue. 2 disordered regions span residues 599-653 (AIEA…DLYV) and 658-677 (VPPTLTEDELKPSTSKRKFD). The span at 608–618 (FEEDTEEETEL) shows a compositional bias: acidic residues. Residues 628–649 (EGQSSDAGQEQDPNTLNDSTGN) are compositionally biased toward polar residues. The UBZ3-type 1 zinc finger occupies 701-737 (DILPTIKCDQCGANIPDEVKSLQTHRDHHFAQELSRT). The Zn(2+) site is built by Cys708, Cys711, His725, and His729. Residues 722–783 (LQTHRDHHFA…YSTAPPSNSI (62 aa)) form a disordered region. Basic and acidic residues predominate over residues 739–748 (RSTEREERTQ). Residues 766 to 780 (TAGSGSSSYSTAPPS) are compositionally biased toward low complexity. The UBZ3-type 2 zinc-finger motif lies at 798 to 832 (SDPQMNQCPECKAFIKCVDMPEHLDYHVARNLQRE). Positions 805, 808, 820, and 824 each coordinate Zn(2+). A disordered region spans residues 846–870 (NKEKISPVQPKKQSQKKLNSTISAS).

The protein belongs to the DNA polymerase type-Y family. As to quaternary structure, interacts (via C-terminus) with nopo. It depends on Mg(2+) as a cofactor. The cofactor is Mn(2+). In terms of processing, ubiquitination enhanced by nopo. In terms of tissue distribution, expressed in ovaries and testes.

The protein localises to the nucleus. It catalyses the reaction DNA(n) + a 2'-deoxyribonucleoside 5'-triphosphate = DNA(n+1) + diphosphate. With respect to regulation, the enzyme in complex with the DNA substrate binds a third divalent metal cation. This binding is essential for catalyzing the DNA synthesis. Functionally, DNA polymerase specifically involved in the DNA repair by translesion synthesis (TLS). Plays an important role in translesion synthesis, where the normal high-fidelity DNA polymerases cannot proceed and DNA synthesis stalls. Inserts one or 2 nucleotide(s) opposite the lesion. During homologous recombination (HR) repair, has a overlapping role with the error-prone translesion polymerase PolZ1/DNApol-zeta to initiate repair synthesis that is completed by end joining or another polymerase that can bind and reinitiate synthesis. Particularly important for the repair of UV-induced pyrimidine dimers and for hydroxyurea (HU)-induced DNA damage. Although inserts the correct base, may cause base transitions and transversions depending upon the context. Forms a Schiff base with 5'-deoxyribose phosphate at abasic sites, but does not have any lyase activity, preventing the release of the 5'-deoxyribose phosphate (5'-dRP) residue. This covalent trapping of the enzyme by the 5'-dRP residue inhibits its DNA synthetic activity during base excision repair, thereby avoiding high incidence of mutagenesis. The polypeptide is DNA polymerase eta (Drosophila melanogaster (Fruit fly)).